We begin with the raw amino-acid sequence, 349 residues long: Achromobactin transport system permease protein CbrC (349 aa).

10 helical membrane passes run 32-52, 82-102, 111-131, 138-158, 168-188, 190-210, 216-236, 263-283, 290-310, and 325-345; these read LALL…KLML, VLAA…QAMI, ILGI…FLAA, LPLA…WLAW, VLTG…MLVF, PLTT…GASW, LGGW…QVRV, VALA…GLIA, LVAP…AGLV, and DLPA…YLLI.

Belongs to the binding-protein-dependent transport system permease family. FecCD subfamily.

It localises to the cell inner membrane. Part of the binding-protein-dependent transport system CbrABCD for uptake of the siderophore achromobactin. Probably responsible for the translocation of the substrate across the membrane. This is Achromobactin transport system permease protein CbrC (cbrC) from Dickeya dadantii (strain 3937) (Erwinia chrysanthemi (strain 3937)).